A 176-amino-acid polypeptide reads, in one-letter code: MAFEELLEDPVIQKYLHELVGPKGMPVAAAPPDGEVTDEELAEELGLELNDVRRALFILYENDLATYRRLRDEDSGWLTYLWTFQYEKIPEQLQEEMHRLLDGLEERREYERENEFYLCEHCGIRFEFGEAMEFGFECPECGNQVETMENTRLVTAMENRLEELRDELNADVDVEA.

One can recognise an HTH TFE/IIEalpha-type domain in the interval 8-90 (EDPVIQKYLH…LWTFQYEKIP (83 aa)).

The protein belongs to the TFE family. As to quaternary structure, monomer. Interaction with RNA polymerase subunits RpoF and RpoE is necessary for Tfe stimulatory transcription activity. Able to interact with Tbp and RNA polymerase in the absence of DNA promoter. Interacts both with the preinitiation and elongation complexes.

Transcription factor that plays a role in the activation of archaeal genes transcribed by RNA polymerase. Facilitates transcription initiation by enhancing TATA-box recognition by TATA-box-binding protein (Tbp), and transcription factor B (Tfb) and RNA polymerase recruitment. Not absolutely required for transcription in vitro, but particularly important in cases where Tbp or Tfb function is not optimal. It dynamically alters the nucleic acid-binding properties of RNA polymerases by stabilizing the initiation complex and destabilizing elongation complexes. Seems to translocate with the RNA polymerase following initiation and acts by binding to the non template strand of the transcription bubble in elongation complexes. The protein is Transcription factor E of Haloarcula marismortui (strain ATCC 43049 / DSM 3752 / JCM 8966 / VKM B-1809) (Halobacterium marismortui).